We begin with the raw amino-acid sequence, 415 residues long: Interleukin-5 receptor subunit alpha (415 aa).

Positions 1–17 (MVPVLLILVGALATLQA) are cleaved as a signal peptide. Residues 18-339 (DLLNHKKFLL…KERKSLVEWH (322 aa)) are Extracellular-facing. The Fibronectin type-III 1 domain occupies 29–120 (PPVNFTIKAT…VSAELKAPPG (92 aa)). Asn-32 and Asn-128 each carry an N-linked (GlcNAc...) asparagine glycan. 2 disulfide bridges follow: Cys-131-Cys-152 and Cys-179-Cys-193. N-linked (GlcNAc...) asparagine glycosylation is found at Asn-213 and Asn-241. The region spanning 238-331 (PPRNVTVEIE…WSQPIYVGKE (94 aa)) is the Fibronectin type-III 2 domain. A disulfide bond links Cys-266 and Cys-313. Residues 319 to 323 (WGEWS) carry the WSXWS motif motif. The chain crosses the membrane as a helical span at residues 340–361 (LIVLPTAACFVLLIFSLICRVC). Over 362-415 (HLWTRLFPPVPAPKSNIKDLPVVTEYEKPSNETKIEVVHCVEEVGFEVMGNSTF) the chain is Cytoplasmic. The Box 1 motif signature appears at 367-375 (LFPPVPAPK).

In terms of assembly, interacts with IL5. Interacts with CSF2RB. Interacts with JAK2. Interacts with SDCBP. In terms of tissue distribution, expressed on eosinophils and basophils. Also on B-cells.

The protein localises to the membrane. Cell surface receptor that plays an important role in the survival, differentiation, and chemotaxis of eosinophils. Acts by forming a heterodimeric receptor with CSF2RB subunit and subsequently binding to interleukin-5. In unstimulated conditions, interacts constitutively with JAK2. Heterodimeric receptor activation leads to JAK2 stimulation and subsequent activation of the JAK-STAT pathway. This chain is Interleukin-5 receptor subunit alpha (Il5ra), found in Mus musculus (Mouse).